The primary structure comprises 466 residues: Probable aminotransferase Rv3329 (466 aa).

Lys-294 is modified (N6-(pyridoxal phosphate)lysine).

Belongs to the class-III pyridoxal-phosphate-dependent aminotransferase family. It depends on pyridoxal 5'-phosphate as a cofactor.

In terms of biological role, probable aminotransferase. This is Probable aminotransferase Rv3329 from Mycobacterium tuberculosis (strain ATCC 25618 / H37Rv).